The sequence spans 365 residues: Deoxyribonuclease-2-alpha (365 aa).

Residues 1 to 19 form the signal peptide; the sequence is MATLSSLLLTALLWVPVGT. A disulfide bridge links Cys-22 with Cys-162. Asn-215, Asn-269, and Asn-293 each carry an N-linked (GlcNAc...) asparagine glycan. Cystine bridges form between Cys-270–Cys-348 and Cys-311–Cys-330. His-298 is a catalytic residue.

This sequence belongs to the DNase II family.

It localises to the lysosome. The catalysed reaction is Endonucleolytic cleavage to nucleoside 3'-phosphates and 3'-phosphooligonucleotide end-products.. In terms of biological role, hydrolyzes DNA under acidic conditions with a preference for double-stranded DNA. Plays a major role in the clearance of nucleic acids generated through apoptosis, hence preventing autoinflammation. Necessary for proper fetal development and for definitive erythropoiesis in fetal liver and bone marrow, where it degrades nuclear DNA expelled from erythroid precursor cells. In Bos taurus (Bovine), this protein is Deoxyribonuclease-2-alpha (DNASE2).